Consider the following 233-residue polypeptide: UPF0128 protein MJ1463 (233 aa).

It belongs to the UPF0128 family.

The sequence is that of UPF0128 protein MJ1463 from Methanocaldococcus jannaschii (strain ATCC 43067 / DSM 2661 / JAL-1 / JCM 10045 / NBRC 100440) (Methanococcus jannaschii).